The chain runs to 294 residues: Cell division protein ZipA (294 aa).

Position 1 (M1) is a topological domain, periplasmic. Residues E2–F22 form a helical membrane-spanning segment. Over D23–R294 the chain is Cytoplasmic. A disordered region spans residues P47 to Q107. The span at A82–P91 shows a compositional bias: basic and acidic residues.

Belongs to the ZipA family. In terms of assembly, interacts with FtsZ via their C-terminal domains.

The protein resides in the cell inner membrane. Its function is as follows. Essential cell division protein that stabilizes the FtsZ protofilaments by cross-linking them and that serves as a cytoplasmic membrane anchor for the Z ring. Also required for the recruitment to the septal ring of downstream cell division proteins. This chain is Cell division protein ZipA, found in Pseudomonas putida (strain W619).